The following is a 213-amino-acid chain: Adenylate kinase (213 aa).

Residue 10-15 coordinates ATP; sequence GAGKGT. The segment at 30 to 59 is NMP; the sequence is STGNLLRDEVKSKTDLGVDIEKLISNGKFV. Residues threonine 31, arginine 36, 57–59, 85–88, and glutamine 92 contribute to the AMP site; these read KFV and GYPR. The tract at residues 126–162 is LID; it reads GRMTCEKCNMTLNEYFNKEQIELHPCGVEHLKKRKDD. Arginine 127 is an ATP binding site. 2 residues coordinate AMP: arginine 159 and arginine 170. Glycine 198 serves as a coordination point for ATP.

It belongs to the adenylate kinase family. Monomer.

The protein localises to the cytoplasm. The catalysed reaction is AMP + ATP = 2 ADP. It functions in the pathway purine metabolism; AMP biosynthesis via salvage pathway; AMP from ADP: step 1/1. Its function is as follows. Catalyzes the reversible transfer of the terminal phosphate group between ATP and AMP. Plays an important role in cellular energy homeostasis and in adenine nucleotide metabolism. The sequence is that of Adenylate kinase from Pelagibacter ubique (strain HTCC1062).